A 539-amino-acid polypeptide reads, in one-letter code: MPSPTGVFVLMILTHLSFGLGQVRNEDQLLMVGQNGDLDSSNPAIHHQQHQQHQQHQQHQQHQSNHNLNNGNMNSTILNTLMGNNAGQVVNSSPGGGGSMINQLGSSTSSVPSVIGGGVGSVGNPWHSAVGLGVPGNGMGLPSSHGLGGNMGSHPHGHALAGLAKLGIIVPGGQGLPGNLGYGGTMLNGGGVGGAAGMGLGIGSNTNNMDMQQGLYNEHFISEHTVMAVFTSQGQVGGPCRYMPATRRQNHQCRKETGLPGTLSEARRLATTHCEEQFRYDRWNCSIETRGKRNIFKKLYKETAFVHALTAAAMTHSIARACAEGRMTKCSCGPKKHNREAQDFQWGGCNDNLKHGKRVTRSFLDLRGGDGDEVSEILRHDSEVGIEAVSSQMMDKCKCHGVSGSCSMKTCWKKMADFNATATLLRQKYNEAIRKAPNQRSMRQVSSSRMKKPKQRRKKPQQSQYTTLYYLETSPSYCAVTKDRQCLHPDNCGTLCCGRGYTTQVVKQVEKCRCRFNNGRCCQLICDYCQRLENKYFCK.

Positions 1 to 21 are cleaved as a signal peptide; that stretch reads MPSPTGVFVLMILTHLSFGLG. A disordered region spans residues 34 to 77; that stretch reads QNGDLDSSNPAIHHQQHQQHQQHQQHQQHQSNHNLNNGNMNSTI. Low complexity predominate over residues 51–74; the sequence is QQHQQHQQHQQHQSNHNLNNGNMN. Asn-74 and Asn-284 each carry an N-linked (GlcNAc...) asparagine glycan. 5 disulfides stabilise this stretch: Cys-274–Cys-285, Cys-322–Cys-330, Cys-332–Cys-349, Cys-397–Cys-411, and Cys-399–Cys-406. Residue Ser-403 is the site of O-palmitoleoyl serine; by PORCN attachment. Asn-419 carries N-linked (GlcNAc...) asparagine glycosylation. Residues 436–463 are disordered; the sequence is APNQRSMRQVSSSRMKKPKQRRKKPQQS. A compositionally biased stretch (low complexity) spans 439–448; the sequence is QRSMRQVSSS. Basic residues predominate over residues 449 to 460; the sequence is RMKKPKQRRKKP. Cystine bridges form between Cys-478-Cys-497, Cys-486-Cys-492, Cys-496-Cys-538, Cys-512-Cys-529, Cys-514-Cys-526, and Cys-521-Cys-522.

This sequence belongs to the Wnt family. Palmitoleoylated by porcupine. The lipid group functions as a sorting signal, targeting the ligand to polarized vesicles that transport Wnt4 to unique sites at the cell surface. Depalmitoleoylated by notum, leading to inhibit Wnt signaling pathway.

It is found in the secreted. It localises to the extracellular space. The protein resides in the extracellular matrix. In terms of biological role, binds as a ligand to a family of frizzled seven-transmembrane receptors and acts through a cascade of genes on the nucleus. Acts downstream of homeotic complex genes in the visceral mesoderm and is required for embryonic segmentation. Also required for cell movement and FAK regulation during ovarian morphogenesis. The sequence is that of Protein Wnt-4 (Wnt4) from Drosophila melanogaster (Fruit fly).